Reading from the N-terminus, the 277-residue chain is Cis-3,4-dihydrophenanthrene-3,4-diol dehydrogenase (277 aa).

Residues F10 to D37 and D60 contribute to the NAD(+) site. S143 provides a ligand contact to substrate. Y156 functions as the Proton acceptor in the catalytic mechanism. K160 provides a ligand contact to NAD(+).

This sequence belongs to the short-chain dehydrogenases/reductases (SDR) family. Homotetramer.

It carries out the reaction (3S,4R)-3,4-dihydrophenanthrene-3,4-diol + NAD(+) = phenanthrene-3,4-diol + NADH + H(+). Its activity is regulated as follows. Inhibited by heavy metal such as Hg(2+) and by p-chloromercuribenzoate. Functionally, involved in the degradation of phenanthrene. Catalyzes the oxidation of cis-phenanthrene dihydrodiol (PDD) to yield phenanthrenediol. It can use either NAD or NADP as electron acceptor, however NAD is preferred to NADP. This is Cis-3,4-dihydrophenanthrene-3,4-diol dehydrogenase (phnB) from Alcaligenes faecalis.